A 327-amino-acid polypeptide reads, in one-letter code: Phenylalanine--tRNA ligase alpha subunit (327 aa).

Residue glutamate 252 coordinates Mg(2+).

The protein belongs to the class-II aminoacyl-tRNA synthetase family. Phe-tRNA synthetase alpha subunit type 1 subfamily. As to quaternary structure, tetramer of two alpha and two beta subunits. Mg(2+) serves as cofactor.

The protein resides in the cytoplasm. The catalysed reaction is tRNA(Phe) + L-phenylalanine + ATP = L-phenylalanyl-tRNA(Phe) + AMP + diphosphate + H(+). In Vibrio vulnificus (strain CMCP6), this protein is Phenylalanine--tRNA ligase alpha subunit.